Here is a 720-residue protein sequence, read N- to C-terminus: Casein kinase II subunit alpha'-interacting protein (720 aa).

Residues 227–249 are compositionally biased toward polar residues; that stretch reads LSSPSFTNRLQRNSFPPTSSSLE. Disordered stretches follow at residues 227–250, 264–303, 333–366, 602–640, and 678–698; these read LSSP…SLEF, KPLK…SRRL, QNTA…SPKP, TQVQ…VDPT, and LRQS…KCLK. Residues 608-626 are compositionally biased toward low complexity; that stretch reads SSSSSSSCSSVSSSSSASS. Over residues 630 to 640 the composition is skewed to pro residues; the sequence is PSPPTPWVDPT. The span at 687–698 shows a compositional bias: basic residues; that stretch reads KPVRSHNSKCLK.

As to quaternary structure, interacts (via C-terminus) with CSNK2A2. Post-translationally, phosphorylated by CK2 (casein kinase II), specifically by complexes containing catalytic subunit CSNK2A2. Expressed exclusively in testis (at protein level). Within testis, expressed mainly in the intermediate compartment of the seminiferous tubules with weaker expression in the basal and adluminal compartments.

Its subcellular location is the nucleus. Its function is as follows. May play a role in chromatin regulation of male germ cells. The polypeptide is Casein kinase II subunit alpha'-interacting protein (Mus musculus (Mouse)).